A 178-amino-acid chain; its full sequence is Gamma-crystallin S (178 aa).

N-acetylserine is present on Ser-2. Residues Ser-2–Gly-5 form an N-terminal arm region. 2 consecutive Beta/gamma crystallin 'Greek key' domains span residues Thr-6–Gly-44 and Gly-45–His-87. Positions Leu-88 to Gln-93 are connecting peptide. Beta/gamma crystallin 'Greek key' domains are found at residues Tyr-94 to Asp-134 and Gly-135 to Val-177.

This sequence belongs to the beta/gamma-crystallin family. As to quaternary structure, monomer.

In terms of biological role, crystallins are the dominant structural components of the vertebrate eye lens. In Canis lupus familiaris (Dog), this protein is Gamma-crystallin S (CRYGS).